Consider the following 85-residue polypeptide: Putative RING finger protein 095L (85 aa).

The segment at 39–73 (CPIWYNYQVNTVFLPCAHVACYLCSKIIKNCHLCR) adopts an RING-type; degenerate zinc-finger fold.

In Invertebrate iridescent virus 6 (IIV-6), this protein is Putative RING finger protein 095L.